The primary structure comprises 173 residues: Myosin light chain 5 (173 aa).

The segment at 1–20 (MASRKTKKKEGGALRAQRAS) is disordered. 3 consecutive EF-hand domains span residues 30–65 (TQIQ…LGKT), 100–135 (DAEE…QADK), and 136–171 (MTAE…GEEK). The Ca(2+) site is built by aspartate 43, asparagine 45, aspartate 47, and aspartate 54.

As to quaternary structure, myosin is a hexamer of 2 heavy chains and 4 light chains. Expressed in fetal skeletal muscle and retina.

The sequence is that of Myosin light chain 5 (MYL5) from Homo sapiens (Human).